The chain runs to 941 residues: Protocadherin alpha-12 (941 aa).

Positions 1–29 (MVIIGPRGPGSQRLLLSLLLLAAWEVGSG) are cleaved as a signal peptide. 6 consecutive Cadherin domains span residues 30 to 133 (QLHY…PPVF), 134 to 242 (RERE…GPAF), 243 to 350 (DKPS…VPEV), 351 to 455 (MVTS…APAF), 456 to 565 (AQPE…APAL), and 581 to 678 (VPRS…APKT). At 30-697 (QLHYSVYEEA…DPEAALVDIN (668 aa)) the chain is on the extracellular side. N-linked (GlcNAc...) asparagine glycosylation is found at asparagine 257 and asparagine 265. Asparagine 548 carries N-linked (GlcNAc...) asparagine glycosylation. A helical membrane pass occupies residues 698–718 (VYLIIAICAVSSLLVLTLLLY). At 719–941 (TALRCSAPPT…GNSTTDNSDQ (223 aa)) the chain is on the cytoplasmic side. PXXP repeat units lie at residues 734-737 (PGKP), 790-793 (PRQP), 823-826 (PGGP), 863-866 (GPGN), and 882-885 (PGSP). The tract at residues 734–885 (PGKPTLVCSS…PDKFIIPGSP (152 aa)) is 5 X 4 AA repeats of P-X-X-P. The segment at 818 to 941 (ILRAGPGGPD…GNSTTDNSDQ (124 aa)) is disordered. Over residues 900–914 (DKSDFITFGKKEETK) the composition is skewed to basic and acidic residues.

The protein resides in the cell membrane. In terms of biological role, potential calcium-dependent cell-adhesion protein. May be involved in the establishment and maintenance of specific neuronal connections in the brain. This Pan troglodytes (Chimpanzee) protein is Protocadherin alpha-12 (PCDHA12).